Reading from the N-terminus, the 298-residue chain is Olfactory receptor 5AK3 (298 aa).

At 1-25 (MGRGNSTEVTEFHLLGFGVQHEFQH) the chain is on the extracellular side. N-linked (GlcNAc...) asparagine glycosylation is present at asparagine 5. Residues 26–46 (VLFIVLLLIYVTSLIGNIGMI) form a helical membrane-spanning segment. The Cytoplasmic portion of the chain corresponds to 47–54 (LLIKTDSR). A helical transmembrane segment spans residues 55–75 (LQTPMYFFPQHLAFVDICYTS). At 76–99 (AITPKMLQSFTEENNLITFRGCVI) the chain is on the extracellular side. Cysteines 97 and 189 form a disulfide. A helical membrane pass occupies residues 100–120 (QFLVYATFATSDCYLLAIMAM). The Cytoplasmic segment spans residues 121–133 (DCYVAICKPLRYP). The chain crosses the membrane as a helical span at residues 134–154 (MIMSQTVYIQLVAGSYIIGSI). N-linked (GlcNAc...) asparagine glycosylation occurs at asparagine 155. The Extracellular segment spans residues 155–196 (NASVHTGFTFSLSFCKSNKINHFFCDGLPILALSCSNIDINI). The helical transmembrane segment at 197 to 217 (ILDVVFVGFDLMFTELVIIFS) threads the bilayer. Topologically, residues 218-237 (YIYIMVTILKMSSTAGRKKS) are cytoplasmic. A helical transmembrane segment spans residues 238–258 (FSTCASHLTAVTIFYGTLSYM). At 259–271 (YLQPQSNNSQENM) the chain is on the extracellular side. Asparagine 265 is a glycosylation site (N-linked (GlcNAc...) asparagine). The chain crosses the membrane as a helical span at residues 272–292 (KVASIFYGTVIPMLNPLIYSL). Residues 293–298 (RNKEGK) are Cytoplasmic-facing.

It belongs to the G-protein coupled receptor 1 family.

The protein resides in the cell membrane. Odorant receptor. The protein is Olfactory receptor 5AK3 (OR5AK3P) of Homo sapiens (Human).